The sequence spans 374 residues: DNA integrity scanning protein DisA (374 aa).

Residues 20–158 (DGLMRASLSA…DGQRRVLEDS (139 aa)) enclose the DAC domain. ATP-binding positions include glycine 87, leucine 105, and 118-122 (TRHRT).

Belongs to the DisA family. In terms of assembly, homooctamer. Interacts with RadA. It depends on Mg(2+) as a cofactor.

It catalyses the reaction 2 ATP = 3',3'-c-di-AMP + 2 diphosphate. Its activity is regulated as follows. Diadenylate cyclase activity is inhibited by the interaction with RadA. Its function is as follows. Participates in a DNA-damage check-point that is active prior to asymmetric division when DNA is damaged. DisA forms globular foci that rapidly scan along the chromosomes during sporulation, searching for lesions. When a lesion is present, DisA pauses at the lesion site. This triggers a cellular response that culminates in a temporary block in sporulation initiation. Also has diadenylate cyclase activity, catalyzing the condensation of 2 ATP molecules into cyclic di-AMP (c-di-AMP). c-di-AMP acts as a signaling molecule that couples DNA integrity with progression of sporulation. The rise in c-di-AMP level generated by DisA while scanning the chromosome, operates as a positive signal that advances sporulation; upon encountering a lesion, the DisA focus arrests at the damaged site and halts c-di-AMP synthesis. The protein is DNA integrity scanning protein DisA of Streptomyces coelicolor (strain ATCC BAA-471 / A3(2) / M145).